Reading from the N-terminus, the 304-residue chain is Murein tetrapeptide carboxypeptidase (304 aa).

Serine 106 serves as the catalytic Nucleophile. Catalysis depends on charge relay system residues glutamate 200 and histidine 270.

It belongs to the peptidase S66 family.

The protein localises to the cytoplasm. It carries out the reaction N-acetyl-D-glucosaminyl-N-acetylmuramoyl-L-alanyl-meso-2,6-diaminoheptanedioyl-D-alanine + H2O = N-acetyl-D-glucosaminyl-N-acetylmuramoyl-L-alanyl-meso-2,6-diaminoheptanedioate + D-alanine. It functions in the pathway cell wall biogenesis; peptidoglycan recycling. Releases the terminal D-alanine residue from the cytoplasmic tetrapeptide recycling product L-Ala-gamma-D-Glu-meso-Dap-D-Ala. Can also cleave D-Ala from murein derivatives containing the tetrapeptide, i.e. MurNAc-tetrapeptide, UDP-MurNAc-tetrapeptide, GlcNAc-MurNAc-tetrapeptide, and GlcNAc-anhMurNAc-tetrapeptide. Does not act on murein sacculi or cross-linked muropeptides. The tripeptides produced by the LcdA reaction can then be reused as peptidoglycan building blocks; LcdA is thereby involved in murein recycling. In Escherichia coli O6:H1 (strain CFT073 / ATCC 700928 / UPEC), this protein is Murein tetrapeptide carboxypeptidase (ldcA).